Reading from the N-terminus, the 100-residue chain is Small ribosomal subunit protein uS14c (100 aa).

It belongs to the universal ribosomal protein uS14 family. As to quaternary structure, part of the 30S ribosomal subunit.

The protein resides in the plastid. Its subcellular location is the chloroplast. Its function is as follows. Binds 16S rRNA, required for the assembly of 30S particles. In Lepidium virginicum (Virginia pepperweed), this protein is Small ribosomal subunit protein uS14c.